The chain runs to 525 residues: 2,3-bisphosphoglycerate-independent phosphoglycerate mutase (525 aa).

2 residues coordinate Mn(2+): Asp15 and Ser65. Catalysis depends on Ser65, which acts as the Phosphoserine intermediate. Substrate contacts are provided by residues His126, 156 to 157 (RD), Arg188, Arg194, 258 to 261 (RPDR), and Lys331. Mn(2+) is bound by residues Asp398, His402, Asp439, His440, and His457.

It belongs to the BPG-independent phosphoglycerate mutase family. As to quaternary structure, monomer. Mn(2+) is required as a cofactor.

The enzyme catalyses (2R)-2-phosphoglycerate = (2R)-3-phosphoglycerate. Its pathway is carbohydrate degradation; glycolysis; pyruvate from D-glyceraldehyde 3-phosphate: step 3/5. Functionally, catalyzes the interconversion of 2-phosphoglycerate and 3-phosphoglycerate. This chain is 2,3-bisphosphoglycerate-independent phosphoglycerate mutase, found in Picosynechococcus sp. (strain ATCC 27264 / PCC 7002 / PR-6) (Agmenellum quadruplicatum).